The chain runs to 538 residues: ATP synthase subunit beta, mitochondrial (538 aa).

Residue 215-222 participates in ATP binding; it reads GGAGVGKT.

The protein belongs to the ATPase alpha/beta chains family. In terms of assembly, subunit of the F-type ATPase which has 2 components, CF(1) - the catalytic core - and CF(0) - the membrane proton channel. Interacts (via N-terminus) with lov-1 (via PLAT domain). Expressed in three categories of adult male sensory neurons: tail ray B neurons, HOB hook neuron and head cephalic (CEM) neurons.

It localises to the cell projection. It is found in the cilium. The protein resides in the mitochondrion. The protein localises to the mitochondrion inner membrane. It carries out the reaction ATP + H2O + 4 H(+)(in) = ADP + phosphate + 5 H(+)(out). Functionally, mitochondrial membrane ATP synthase (F(1)F(0) ATP synthase or Complex V) produces ATP from ADP in the presence of a proton gradient across the membrane which is generated by electron transport complexes of the respiratory chain. F-type ATPases consist of two structural domains, F(1) - containing the extramembraneous catalytic core, and F(0) - containing the membrane proton channel, linked together by a central stalk and a peripheral stalk. During catalysis, ATP synthesis in the catalytic domain of F(1) is coupled via a rotary mechanism of the central stalk subunits to proton translocation. Subunits alpha and beta form the catalytic core in F(1). Rotation of the central stalk against the surrounding subunits leads to hydrolysis of ATP in three separate catalytic sites on the beta subunits. Required during male mating behavior for the response to hermaphrodite contact, acting with lov-1 and pkd-2. May be involved in polycystin signaling. The polypeptide is ATP synthase subunit beta, mitochondrial (Caenorhabditis elegans).